We begin with the raw amino-acid sequence, 557 residues long: IgE-binding protein (557 aa).

Residues 113 to 172 (DGLGKPALSSSEAGEESSSEETDWEEEAAHYQPANWSRKKPKAAGEGQFADWPQGSRLQG) form a disordered region. The span at 125–138 (AGEESSSEETDWEE) shows a compositional bias: acidic residues. Positions 344–534 (TAIRPGRRSR…TAAERHVQSQ (191 aa)) constitute an Integrase catalytic domain.

This chain is IgE-binding protein (Iap), found in Mus musculus (Mouse).